A 93-amino-acid chain; its full sequence is Large ribosomal subunit protein bL31B (93 aa).

It belongs to the bacterial ribosomal protein bL31 family. Type B subfamily. In terms of assembly, part of the 50S ribosomal subunit.

This chain is Large ribosomal subunit protein bL31B, found in Psychrobacter arcticus (strain DSM 17307 / VKM B-2377 / 273-4).